A 443-amino-acid chain; its full sequence is Ribosomal protein uS12 methylthiotransferase RimO (443 aa).

Positions 8-118 (PKVGFVSLGC…VVNAVHEVVP (111 aa)) constitute an MTTase N-terminal domain. [4Fe-4S] cluster contacts are provided by C17, C53, C82, C151, C155, and C158. The Radical SAM core domain occupies 137–376 (LTPRHYAYLK…AHQQAISSAR (240 aa)). The 66-residue stretch at 378–443 (QLRIGKEIEV…DEYDMWAEPV (66 aa)) folds into the TRAM domain.

The protein belongs to the methylthiotransferase family. RimO subfamily. [4Fe-4S] cluster serves as cofactor.

The protein localises to the cytoplasm. It carries out the reaction L-aspartate(89)-[ribosomal protein uS12]-hydrogen + (sulfur carrier)-SH + AH2 + 2 S-adenosyl-L-methionine = 3-methylsulfanyl-L-aspartate(89)-[ribosomal protein uS12]-hydrogen + (sulfur carrier)-H + 5'-deoxyadenosine + L-methionine + A + S-adenosyl-L-homocysteine + 2 H(+). Functionally, catalyzes the methylthiolation of an aspartic acid residue of ribosomal protein uS12. This Pseudomonas putida (strain W619) protein is Ribosomal protein uS12 methylthiotransferase RimO.